The sequence spans 114 residues: Photosystem II reaction center Psb28 protein (114 aa).

Belongs to the Psb28 family. Part of the photosystem II complex.

It localises to the cellular thylakoid membrane. In Rippkaea orientalis (strain PCC 8801 / RF-1) (Cyanothece sp. (strain PCC 8801)), this protein is Photosystem II reaction center Psb28 protein.